The following is a 364-amino-acid chain: tRNA(Met) cytidine acetate ligase (364 aa).

Residues 7–20, G96, N152, and R175 each bind ATP; that span reads IAEF…HKYL.

The protein belongs to the TmcAL family.

The protein localises to the cytoplasm. The catalysed reaction is cytidine(34) in elongator tRNA(Met) + acetate + ATP = N(4)-acetylcytidine(34) in elongator tRNA(Met) + AMP + diphosphate. Its function is as follows. Catalyzes the formation of N(4)-acetylcytidine (ac(4)C) at the wobble position of elongator tRNA(Met), using acetate and ATP as substrates. First activates an acetate ion to form acetyladenylate (Ac-AMP) and then transfers the acetyl group to tRNA to form ac(4)C34. This Streptococcus sanguinis (strain SK36) protein is tRNA(Met) cytidine acetate ligase.